Here is a 98-residue protein sequence, read N- to C-terminus: NADH-ubiquinone oxidoreductase chain 4L (98 aa).

3 consecutive transmembrane segments (helical) span residues 1–21 (MSMV…GLLM), 29–49 (SLLC…VAIL), and 61–81 (IILL…LVMV).

It belongs to the complex I subunit 4L family. Core subunit of respiratory chain NADH dehydrogenase (Complex I) which is composed of 45 different subunits.

The protein localises to the mitochondrion inner membrane. It catalyses the reaction a ubiquinone + NADH + 5 H(+)(in) = a ubiquinol + NAD(+) + 4 H(+)(out). Core subunit of the mitochondrial membrane respiratory chain NADH dehydrogenase (Complex I) which catalyzes electron transfer from NADH through the respiratory chain, using ubiquinone as an electron acceptor. Part of the enzyme membrane arm which is embedded in the lipid bilayer and involved in proton translocation. In Puma concolor (Mountain lion), this protein is NADH-ubiquinone oxidoreductase chain 4L (MT-ND4L).